The primary structure comprises 650 residues: Probable Xaa-Pro aminopeptidase P (650 aa).

Asp-447, Asp-458, Glu-556, and Glu-570 together coordinate Mn(2+).

Belongs to the peptidase M24B family. It depends on Mn(2+) as a cofactor.

The enzyme catalyses Release of any N-terminal amino acid, including proline, that is linked to proline, even from a dipeptide or tripeptide.. Functionally, catalyzes the removal of a penultimate prolyl residue from the N-termini of peptides. The polypeptide is Probable Xaa-Pro aminopeptidase P (AMPP) (Phaeosphaeria nodorum (strain SN15 / ATCC MYA-4574 / FGSC 10173) (Glume blotch fungus)).